Here is an 81-residue protein sequence, read N- to C-terminus: Photosystem I iron-sulfur center (81 aa).

4Fe-4S ferredoxin-type domains follow at residues 1–31 (MSHSVKIYDTCIGCTQCVRACPLDVLEMVPW) and 39–68 (IASSPRTEDCIGCKRCETACPTDFLSIRVY). The [4Fe-4S] cluster site is built by cysteine 11, cysteine 14, cysteine 17, cysteine 21, cysteine 48, cysteine 51, cysteine 54, and cysteine 58.

As to quaternary structure, the cyanobacterial PSI reaction center is composed of one copy each of PsaA,B,C,D,E,F,I,J,K,L,M and X, and forms trimeric complexes. The cofactor is [4Fe-4S] cluster.

Its subcellular location is the cellular thylakoid membrane. It catalyses the reaction reduced [plastocyanin] + hnu + oxidized [2Fe-2S]-[ferredoxin] = oxidized [plastocyanin] + reduced [2Fe-2S]-[ferredoxin]. Apoprotein for the two 4Fe-4S centers FA and FB of photosystem I (PSI); essential for photochemical activity. FB is the terminal electron acceptor of PSI, donating electrons to ferredoxin. The C-terminus interacts with PsaA/B/D and helps assemble the protein into the PSI complex. Required for binding of PsaD and PsaE to PSI. PSI is a plastocyanin/cytochrome c6-ferredoxin oxidoreductase, converting photonic excitation into a charge separation, which transfers an electron from the donor P700 chlorophyll pair to the spectroscopically characterized acceptors A0, A1, FX, FA and FB in turn. The sequence is that of Photosystem I iron-sulfur center from Microcystis aeruginosa (strain NIES-843 / IAM M-2473).